We begin with the raw amino-acid sequence, 78 residues long: Large ribosomal subunit protein bL28 (78 aa).

It belongs to the bacterial ribosomal protein bL28 family.

The sequence is that of Large ribosomal subunit protein bL28 from Psychrobacter arcticus (strain DSM 17307 / VKM B-2377 / 273-4).